The primary structure comprises 442 residues: MALPRSQARGWVKAAKMAQRRRPADDTGGPQSPAPGSQRAALYVHWPYCEKRCSYCNFNKYIPRGVDEAALRRCLVIEAQTLLRLSGVRRVESVFFGGGTPSLASPHTVAAVLEAVAQAAHLPADSEVTLEANPTSASGSRLAAFGAAGVNRLSIGLQSLDDTELQLLGRTHSARDALQTLAEAQRLFPGRVSVDLMLGLPAQQVGPWLRQLQGLLRCCDDHVSLYQLSLERGTTLFTQVQQGALPAPDPELAAEMYQEGRAVLREAGFRQYEVSNFARNGALSTHNWTYWQCGQYLGVGPGAHGRFIPQGAGGHTREARIQTLEPDSWMKEVMLFGHGTRRRVPLSELELLEEVLAMGLRTDVGITHQHWQQFEPQLTLWDLFGASKEVKELQEQGLLLLDHRGLRCSWEGLAVLDSLLLSLLSRLQEAWQQRTPSSVPRG.

The transit peptide at 1-22 (MALPRSQARGWVKAAKMAQRRR) directs the protein to the mitochondrion. The tract at residues 1-37 (MALPRSQARGWVKAAKMAQRRRPADDTGGPQSPAPGS) is disordered. The region spanning 34 to 270 (APGSQRAALY…RAVLREAGFR (237 aa)) is the Radical SAM core domain. An S-adenosyl-L-methionine-binding site is contributed by tyrosine 43. 3 residues coordinate [4Fe-4S] cluster: cysteine 49, cysteine 53, and cysteine 56. S-adenosyl-L-methionine contacts are provided by residues glycine 98, 99–100 (GT), glutamate 131, glutamine 158, arginine 170, and aspartate 195.

The protein belongs to the anaerobic coproporphyrinogen-III oxidase family. HemW subfamily. It depends on [4Fe-4S] cluster as a cofactor.

The protein resides in the mitochondrion. May be a heme chaperone, appears to bind heme. Homologous bacterial proteins do not have oxygen-independent coproporphyrinogen-III oxidase activity. Binds 1 [4Fe-4S] cluster. The cluster is coordinated with 3 cysteines and an exchangeable S-adenosyl-L-methionine. This is Radical S-adenosyl methionine domain-containing protein 1, mitochondrial (RSAD1) from Bos taurus (Bovine).